Reading from the N-terminus, the 1310-residue chain is Rho family-interacting cell polarization regulator 2 (1310 aa).

2 positions are modified to phosphoserine: serine 123 and serine 178. Residues 196–254 (MHNLGHKNTNTPKEPQPKRVEEVYRALKNGLDEYLEFHQTELDKLTAQLKDMKRNSRLG) form an involved in cell filopodia formation region. Residues 224-253 (NGLDEYLEFHQTELDKLTAQLKDMKRNSRL) are a coiled coil. Serine 508 carries the phosphoserine modification. Positions 588 to 608 (SSLSSQNEGTEDSSSASSRNS) are enriched in polar residues. Positions 588-639 (SSLSSQNEGTEDSSSASSRNSLGEDHEPKSHSKSDTVEPKKPSVDARSGTES) are disordered. A compositionally biased stretch (basic and acidic residues) spans 609–631 (LGEDHEPKSHSKSDTVEPKKPSV). A Phosphoserine modification is found at serine 682.

This sequence belongs to the RIPOR family. As to quaternary structure, homooligomer; homooligomerization is regulated by RHOC and leads to the formation of concatemers through the association of N- and C-termini. Interacts (phosphorylated form) with 14-3-3 proteins; these interactions occur during myogenic cell differentiation and also induces T cell proliferation arrest. Interacts (phosphorylated form) with HDAC6; this interaction occurs during early myogenic differentiation, prevents HDAC6 to deacetylate tubulin and also induces T cell proliferation arrest. Interacts with DYSF; this interaction occurs during early myogenic differentiation. Interacts with MYOF. Interacts (via active GTP- or inactive GDP-bound forms) with RHOA; this interaction is direct, blocks the loading of GTP to RHOA and decreases upon chemokine CCL19 stimulation in primary T lymphocytes. Interacts with RHOC. Interacts (via phosphorylated form) with YWHAB; this interaction occurs in a chemokine-dependent manner and does not compete for binding of RIPOR2 with RHOA nor blocks inhibition of RIPOR2-mediated RHOA activity. Interacts with YWHAE. Interacts with YWHAQ. In terms of processing, phosphorylated. Chemokine-induced phosphorylation in neutrophils occurs in a PKC- and AKT-dependent manner, resulting in RIPOR2 interaction with YWHAB and stabilization. Phosphorylated by PKCA, AKT1 and MAPKAPK1A; in vitro. In terms of tissue distribution, expressed in the cochlea (at protein level).

The protein resides in the cytoplasm. Its subcellular location is the cytoskeleton. It localises to the cell projection. The protein localises to the filopodium. It is found in the apical cell membrane. The protein resides in the stereocilium. Its subcellular location is the stereocilium membrane. Acts as an inhibitor of the small GTPase RHOA and plays several roles in the regulation of myoblast and hair cell differentiation, lymphocyte T proliferation and neutrophil polarization. Plays a role in fetal mononuclear myoblast differentiation by promoting filopodia and myotube formation. Maintains naive T lymphocytes in a quiescent state and prevents chemokine-induced T lymphocyte responses, such as cell adhesion, polarization and migration. Involved also in the regulation of neutrophil polarization, chemotaxis and adhesion. Required for normal development of inner and outer hair cell stereocilia within the cochlea of the inner ear. Plays a role for maintaining the structural organization of the basal domain of stereocilia. Involved in mechanosensory hair cell function. Required for normal hearing. This Rattus norvegicus (Rat) protein is Rho family-interacting cell polarization regulator 2.